Reading from the N-terminus, the 374-residue chain is SH2 domain-containing protein 2A (374 aa).

Residues 116-207 (WFHGFITRRE…PYGEILTQPL (92 aa)) form the SH2 domain. A disordered region spans residues 213–232 (EPAGLSLRADSDSGSKRQDP). The span at 221–232 (ADSDSGSKRQDP) shows a compositional bias: basic and acidic residues. Ser-237 is modified (phosphoserine). The tract at residues 241 to 301 (QQGQAQASGH…QAPPINPIYQ (61 aa)) is disordered. Positions 256–266 (ASQQKATSQAS) are enriched in polar residues. The SH3-binding signature appears at 267–273 (RPRPPIP). Pro residues predominate over residues 268–279 (PRPPIPAKPQLP). Ser-316 carries the post-translational modification Phosphoserine. Disordered stretches follow at residues 321–340 (PSNIYAEVEGPSGTAPIGHP) and 353–374 (GQVREVQGKISSRSRAERGSPS).

In terms of assembly, interacts with KDR. Interacts with p56-LCK, TXK and ITK. Phosphorylated on tyrosine residues upon TCR-stimulation. In terms of tissue distribution, expression limited to tissues of the immune system and, in particular, activated T-cells and natural killer cells. Expressed in the thymus, lymph node, and to a lesser extent, in the spleen and bone marrow. According to PubMed:10553045, also expressed in the lung.

The protein resides in the cytoplasm. Its subcellular location is the cell membrane. Could be a T-cell-specific adapter protein involved in the control of T-cell activation. May play a role in p56-LCK-mediated T-cell signaling. Could be involved in the regulation of responses to T-cell activation stimuli, specifically proliferation and lymphokine production. Interactions with ITK and TXK may provide important biochemical links of these two important kinases with other components in the T-cell activation machinery. This Mus musculus (Mouse) protein is SH2 domain-containing protein 2A (Sh2d2a).